The following is a 414-amino-acid chain: Histidine--tRNA ligase (414 aa).

Belongs to the class-II aminoacyl-tRNA synthetase family. Homodimer.

The protein resides in the cytoplasm. The catalysed reaction is tRNA(His) + L-histidine + ATP = L-histidyl-tRNA(His) + AMP + diphosphate + H(+). In Pelobacter propionicus (strain DSM 2379 / NBRC 103807 / OttBd1), this protein is Histidine--tRNA ligase.